The following is a 151-amino-acid chain: Ribosome maturation factor RimP (151 aa).

The protein belongs to the RimP family.

Its subcellular location is the cytoplasm. Required for maturation of 30S ribosomal subunits. In Shewanella denitrificans (strain OS217 / ATCC BAA-1090 / DSM 15013), this protein is Ribosome maturation factor RimP.